A 901-amino-acid chain; its full sequence is Protein translocase subunit SecA (901 aa).

ATP-binding positions include Gln85, 103–107, and Asp510; that span reads GEGKT. Positions 848–901 are disordered; sequence RINQNNLPVDENSQTTQNSETEDYSDRRIGRNEPCPCGSGKKYKHCHGSRVARQ. Polar residues predominate over residues 849–866; that stretch reads INQNNLPVDENSQTTQNS. Zn(2+)-binding residues include Cys882, Cys884, Cys893, and His894. Basic residues predominate over residues 888 to 901; that stretch reads KKYKHCHGSRVARQ.

The protein belongs to the SecA family. Monomer and homodimer. Part of the essential Sec protein translocation apparatus which comprises SecA, SecYEG and auxiliary proteins SecDF-YajC and YidC. Forms a complex with SecB. Zn(2+) is required as a cofactor.

The protein resides in the cell inner membrane. The protein localises to the cytoplasm. It carries out the reaction ATP + H2O + cellular proteinSide 1 = ADP + phosphate + cellular proteinSide 2.. Part of the Sec protein translocase complex. Interacts with the SecYEG preprotein conducting channel. Has a central role in coupling the hydrolysis of ATP to the transfer of proteins into and across the cell membrane, serving both as a receptor for the preprotein-SecB complex and as an ATP-driven molecular motor driving the stepwise translocation of polypeptide chains across the membrane. In Haemophilus influenzae (strain ATCC 51907 / DSM 11121 / KW20 / Rd), this protein is Protein translocase subunit SecA.